Reading from the N-terminus, the 430-residue chain is MSAGNMSHDLGPPRDPLAIVIPVTVVYSLIFITGVVGNISTCIVIKKNRSMHTATNYYLFSLAISDFLLLLSGVPQEVSYIWSKYPYVFGEYICIGRGLLAETSANATVLTITAFTVERYIAICHPFLGQAMSKLSRAIRIIVLVWIMAIVTAIPQAAQFGIEHYSGVEQCGIVRVIVKHSFQLSTFIFFLAPMSIILVLYLLIGVHLYRSTLVEGPASVARRQQLKSVPSDTILYRYGGSGTAMSFNGGGSGAGTAGLMGGSGAQLSSVRGRLNHYGTRRVLRMLVAVVVCFFLCWAPFHAQRLIAIYAPARGAKLRDQHEFVYTVMTYVSGVLYYLSTCINPLLYNIMSHKFREAFKAVLFGKKVSKGSLNSRNNIESRRLRRALTNSSQTQRFSIESAEQPKPSIMQNPTNKPPVAAQYAMIGVQVN.

The Extracellular portion of the chain corresponds to Met1–Pro16. The N-linked (GlcNAc...) asparagine glycan is linked to Asn5. The helical transmembrane segment at Leu17 to Gly37 threads the bilayer. Over Asn38–Thr53 the chain is Cytoplasmic. Residues Ala54–Val74 traverse the membrane as a helical segment. Over Pro75–Gly96 the chain is Extracellular. A disulfide bond links Cys94 and Cys171. A helical membrane pass occupies residues Arg97–Val117. The Cytoplasmic segment spans residues Glu118–Arg140. The helical transmembrane segment at Ile141 to Gly161 threads the bilayer. The Extracellular portion of the chain corresponds to Ile162–Ser185. Residues Thr186–Val206 traverse the membrane as a helical segment. Residues His207 to Arg281 are Cytoplasmic-facing. A helical transmembrane segment spans residues Val282 to Ala302. The Extracellular segment spans residues Gln303–His321. A helical membrane pass occupies residues Glu322–Ile342. The Cytoplasmic segment spans residues Asn343–Asn430. The segment covering Thr388–Ser397 has biased composition (polar residues). A disordered region spans residues Thr388–Thr413.

The protein belongs to the G-protein coupled receptor 1 family.

It localises to the cell membrane. In terms of biological role, receptor for the neuropeptide CAP-3/pyrokinin-1 (TGPSASSGLWFGPRL-amide). Also activated weakly by other neuropeptides terminating in the sequence PRL-amide including pyrokinin-2, Hug-gamma, and ecdysis-triggering-hormone-1. The activity of this receptor is mediated by G proteins which activate a phosphatidyl-inositol-calcium second messenger system. The chain is Pyrokinin-1 receptor from Drosophila melanogaster (Fruit fly).